The following is an 89-amino-acid chain: Small ribosomal subunit protein uS15 (89 aa).

Belongs to the universal ribosomal protein uS15 family. As to quaternary structure, part of the 30S ribosomal subunit. Forms a bridge to the 50S subunit in the 70S ribosome, contacting the 23S rRNA.

Its function is as follows. One of the primary rRNA binding proteins, it binds directly to 16S rRNA where it helps nucleate assembly of the platform of the 30S subunit by binding and bridging several RNA helices of the 16S rRNA. Functionally, forms an intersubunit bridge (bridge B4) with the 23S rRNA of the 50S subunit in the ribosome. The protein is Small ribosomal subunit protein uS15 of Pseudomonas putida (strain ATCC 700007 / DSM 6899 / JCM 31910 / BCRC 17059 / LMG 24140 / F1).